The following is a 350-amino-acid chain: (S)-tetrahydroprotoberberine N-methyltransferase (350 aa).

Residues Ser-91, Gly-129, Asn-153, Gln-157, Asp-179, Val-180, and Val-195 each contribute to the S-adenosyl-L-methionine site. The active site involves Cys-325.

This sequence belongs to the CFA/CMAS family. In terms of assembly, homodimer.

The protein localises to the cytoplasm. The catalysed reaction is (S)-stylopine + S-adenosyl-L-methionine = (S)-cis-N-methylstylopine + S-adenosyl-L-homocysteine. It carries out the reaction (S)-tetrahydropalmatine + S-adenosyl-L-methionine = (S)-cis-N-methyltetrahydropalmatine + S-adenosyl-L-homocysteine. The enzyme catalyses (S)-canadine + S-adenosyl-L-methionine = (S)-cis-N-methylcanadine + S-adenosyl-L-homocysteine. It catalyses the reaction (S)-scoulerine + S-adenosyl-L-methionine = (S)-cis-N-methylscoulerine + S-adenosyl-L-homocysteine. It functions in the pathway alkaloid biosynthesis. Functionally, N-methyltransferase with a broad substrate range, accepting protoberberine alkaloids (R,S)-stylopine, (R,S)-nandinine and (R,S)-tetrahydropalmatine, and to a lesser extent (R,S)-canadine, (R,S)-tetrahydrogroenlandicine (cheilanthifoline) and (S)-scoulerine. The protein is (S)-tetrahydroprotoberberine N-methyltransferase of Eschscholzia californica (California poppy).